A 171-amino-acid chain; its full sequence is Skp-like protein (171 aa).

Residues 1-21 (MKKLLFSTFLLVLGSTSAAHA) form the signal peptide.

Belongs to the Skp family.

The chain is Skp-like protein from Chlamydia pneumoniae (Chlamydophila pneumoniae).